Here is a 492-residue protein sequence, read N- to C-terminus: MTDLHHLSVHELADGLKNKQFSSHELVEHFANRINRLDGQINSFITKDFDNALAQAKLADKLRAKGDNRPLLGVPMAHKDNLCTKGVLTTAGSKMLYNFVSPYDATVVDSIANSGFVSLGKLNMDEFAMGSDNESSYFGAVHNPWDVQRVPGGSSGGSAAAVAAGFVPVATGSDTGGSIRQPASFCGITGIKPTYGRVSRYGMIAYASSLDQAGTFGKSALDCAYLLAPMAGYDPKDATSINRPSEDYVADILATKTDGKPLAGKKIGVAKAYFGAGLDSEVEKSIRTALAKYEELGAKIVEVDITDPAITLATYYLLAPAEASSNLSRYDGVRFGYRCENPKDLHDLYTRSRSEGFGAEVQRRIIMGTYALSAGYFDAYYTKAQKVRRLIVDDFKKAFEKCDIIASPTAPTPAYKLGESLDPASIYLLDVYTIGVNLAGLPALSHPVGQANGLPVGLQLISKHWAESELLKTAHIYQSHTDFHQAKADLVK.

Catalysis depends on charge relay system residues K79 and S154. The Acyl-ester intermediate role is filled by S178.

The protein belongs to the amidase family. GatA subfamily. Heterotrimer of A, B and C subunits.

The enzyme catalyses L-glutamyl-tRNA(Gln) + L-glutamine + ATP + H2O = L-glutaminyl-tRNA(Gln) + L-glutamate + ADP + phosphate + H(+). Its function is as follows. Allows the formation of correctly charged Gln-tRNA(Gln) through the transamidation of misacylated Glu-tRNA(Gln) in organisms which lack glutaminyl-tRNA synthetase. The reaction takes place in the presence of glutamine and ATP through an activated gamma-phospho-Glu-tRNA(Gln). This chain is Glutamyl-tRNA(Gln) amidotransferase subunit A (gatA), found in Moraxella catarrhalis (Branhamella catarrhalis).